The chain runs to 137 residues: Nucleoside diphosphate kinase (137 aa).

Residues Lys9, Phe57, Arg85, Thr91, Arg102, and Asn112 each coordinate ATP. His115 serves as the catalytic Pros-phosphohistidine intermediate.

It belongs to the NDK family. As to quaternary structure, homotetramer. Mg(2+) serves as cofactor.

The protein localises to the cytoplasm. It carries out the reaction a 2'-deoxyribonucleoside 5'-diphosphate + ATP = a 2'-deoxyribonucleoside 5'-triphosphate + ADP. The catalysed reaction is a ribonucleoside 5'-diphosphate + ATP = a ribonucleoside 5'-triphosphate + ADP. Its function is as follows. Major role in the synthesis of nucleoside triphosphates other than ATP. The ATP gamma phosphate is transferred to the NDP beta phosphate via a ping-pong mechanism, using a phosphorylated active-site intermediate. This is Nucleoside diphosphate kinase from Campylobacter concisus (strain 13826).